A 128-amino-acid polypeptide reads, in one-letter code: Small ribosomal subunit protein bS6 (128 aa).

It belongs to the bacterial ribosomal protein bS6 family.

Binds together with bS18 to 16S ribosomal RNA. This is Small ribosomal subunit protein bS6 from Thermotoga sp. (strain RQ2).